A 271-amino-acid chain; its full sequence is MPELPEVETTLRGLAPHLVGQRIHGVILRRPDLRWPIAAQIEQLLPGATITDVRRRAKYLLIDTDAGGSAVLHLGMSGSLRVLPGDTPPRAHDHVDISLQNGRVLRFNDPRRFGCLLWQRDCETHELLASLGPEPLSAAFTGDYLHALACGRRAAVKTFLMDQAVVVGVGNIYAAESLHRAGISPLREAGKVSRERYRRLADAVKEILAYAIQRGGTTLRDFISPDGAPGYFEQELMVYGREGEACRHCGGELKHATIGQRATVWCAACQR.

Residue P2 is the Schiff-base intermediate with DNA of the active site. Catalysis depends on E3, which acts as the Proton donor. K58 acts as the Proton donor; for beta-elimination activity in catalysis. 3 residues coordinate DNA: H92, R111, and R152. An FPG-type zinc finger spans residues 237-271 (MVYGREGEACRHCGGELKHATIGQRATVWCAACQR). R261 functions as the Proton donor; for delta-elimination activity in the catalytic mechanism.

It belongs to the FPG family. In terms of assembly, monomer. Zn(2+) serves as cofactor.

The catalysed reaction is Hydrolysis of DNA containing ring-opened 7-methylguanine residues, releasing 2,6-diamino-4-hydroxy-5-(N-methyl)formamidopyrimidine.. It catalyses the reaction 2'-deoxyribonucleotide-(2'-deoxyribose 5'-phosphate)-2'-deoxyribonucleotide-DNA = a 3'-end 2'-deoxyribonucleotide-(2,3-dehydro-2,3-deoxyribose 5'-phosphate)-DNA + a 5'-end 5'-phospho-2'-deoxyribonucleoside-DNA + H(+). In terms of biological role, involved in base excision repair of DNA damaged by oxidation or by mutagenic agents. Acts as a DNA glycosylase that recognizes and removes damaged bases. Has a preference for oxidized purines, such as 7,8-dihydro-8-oxoguanine (8-oxoG). Has AP (apurinic/apyrimidinic) lyase activity and introduces nicks in the DNA strand. Cleaves the DNA backbone by beta-delta elimination to generate a single-strand break at the site of the removed base with both 3'- and 5'-phosphates. In Xanthomonas campestris pv. campestris (strain ATCC 33913 / DSM 3586 / NCPPB 528 / LMG 568 / P 25), this protein is Formamidopyrimidine-DNA glycosylase.